The chain runs to 386 residues: Microtubule-binding protein TANGLED1 (386 aa).

5 disordered regions span residues 83 to 105 (RMRG…GVGG), 140 to 202 (AAGA…RVRS), 244 to 266 (HAST…QKRL), 303 to 330 (PARP…CSFS), and 345 to 386 (RLSL…ISSR). Over residues 170-180 (RARRAREKQSH) the composition is skewed to basic residues. Residues 181-193 (RGGAATRGADAAT) are compositionally biased toward low complexity. Residues 375-386 (TVRTVSSKISSR) show a composition bias toward polar residues.

Expressed in vegetative shoot tips consisting of leaf primordia and the bases of immature leaves, the shoot apical meristem, and unexpanded stem tissue. Strongly expressed in tissues enriched in dividing cells: ear primordia and embryos.

It is found in the cytoplasm. The protein localises to the cytoskeleton. It localises to the spindle. The protein resides in the phragmoplast. In terms of biological role, is required for spatial control cell division during leaf development. Through an association with microtubules, acts both for the positioning of cytoskeletal arrays that establish planes of cell division during prophase and for spatial guidance of expanding phragmoplasts toward preestablished cortical division sites (CDS) during cytokinesis. The sequence is that of Microtubule-binding protein TANGLED1 (TAN1) from Zea mays (Maize).